Consider the following 246-residue polypeptide: Probable transcriptional regulatory protein CLL_A1008 (246 aa).

This sequence belongs to the TACO1 family.

It localises to the cytoplasm. The polypeptide is Probable transcriptional regulatory protein CLL_A1008 (Clostridium botulinum (strain Eklund 17B / Type B)).